A 67-amino-acid chain; its full sequence is Small ribosomal subunit protein eS17 (67 aa).

It belongs to the eukaryotic ribosomal protein eS17 family.

In Thermococcus gammatolerans (strain DSM 15229 / JCM 11827 / EJ3), this protein is Small ribosomal subunit protein eS17.